Reading from the N-terminus, the 954-residue chain is Glycine dehydrogenase (decarboxylating) (954 aa).

Lys-704 bears the N6-(pyridoxal phosphate)lysine mark.

The protein belongs to the GcvP family. As to quaternary structure, the glycine cleavage system is composed of four proteins: P, T, L and H. Requires pyridoxal 5'-phosphate as cofactor.

The catalysed reaction is N(6)-[(R)-lipoyl]-L-lysyl-[glycine-cleavage complex H protein] + glycine + H(+) = N(6)-[(R)-S(8)-aminomethyldihydrolipoyl]-L-lysyl-[glycine-cleavage complex H protein] + CO2. Functionally, the glycine cleavage system catalyzes the degradation of glycine. The P protein binds the alpha-amino group of glycine through its pyridoxal phosphate cofactor; CO(2) is released and the remaining methylamine moiety is then transferred to the lipoamide cofactor of the H protein. The sequence is that of Glycine dehydrogenase (decarboxylating) from Rhizobium etli (strain CIAT 652).